A 545-amino-acid polypeptide reads, in one-letter code: Chromosomal replication initiator protein DnaA (545 aa).

Residues Met1–Pro72 are domain I, interacts with DnaA modulators. Positions Pro72–Ser208 are domain II. The span at Ala90–Gly105 shows a compositional bias: low complexity. 2 disordered regions span residues Ala90–Gly112 and Ala181–Met204. Positions Pro189–Thr201 are enriched in polar residues. The tract at residues Lys209 to Ser425 is domain III, AAA+ region. Residues Gly253, Gly255, Lys256, and Thr257 each contribute to the ATP site. Positions Lys426–Gly545 are domain IV, binds dsDNA.

This sequence belongs to the DnaA family. As to quaternary structure, oligomerizes as a right-handed, spiral filament on DNA at oriC.

Its subcellular location is the cytoplasm. Plays an essential role in the initiation and regulation of chromosomal replication. ATP-DnaA binds to the origin of replication (oriC) to initiate formation of the DNA replication initiation complex once per cell cycle. Binds the DnaA box (a 9 base pair repeat at the origin) and separates the double-stranded (ds)DNA. Forms a right-handed helical filament on oriC DNA; dsDNA binds to the exterior of the filament while single-stranded (ss)DNA is stabiized in the filament's interior. The ATP-DnaA-oriC complex binds and stabilizes one strand of the AT-rich DNA unwinding element (DUE), permitting loading of DNA polymerase. After initiation quickly degrades to an ADP-DnaA complex that is not apt for DNA replication. Binds acidic phospholipids. The protein is Chromosomal replication initiator protein DnaA of Paraburkholderia phytofirmans (strain DSM 17436 / LMG 22146 / PsJN) (Burkholderia phytofirmans).